Here is a 305-residue protein sequence, read N- to C-terminus: tRNA dimethylallyltransferase (305 aa).

9-16 (GPTGAGKT) is an ATP binding site. Residue 11 to 16 (TGAGKT) coordinates substrate. Interaction with substrate tRNA regions lie at residues 34–37 (DSRQ) and 158–162 (QRIVR).

The protein belongs to the IPP transferase family. As to quaternary structure, monomer. Mg(2+) is required as a cofactor.

The catalysed reaction is adenosine(37) in tRNA + dimethylallyl diphosphate = N(6)-dimethylallyladenosine(37) in tRNA + diphosphate. Its function is as follows. Catalyzes the transfer of a dimethylallyl group onto the adenine at position 37 in tRNAs that read codons beginning with uridine, leading to the formation of N6-(dimethylallyl)adenosine (i(6)A). The polypeptide is tRNA dimethylallyltransferase (Oleidesulfovibrio alaskensis (strain ATCC BAA-1058 / DSM 17464 / G20) (Desulfovibrio alaskensis)).